A 339-amino-acid polypeptide reads, in one-letter code: Serpentine receptor class r-10 (339 aa).

Over 1–11 the chain is Extracellular; sequence MSGELWITLVD. The helical transmembrane segment at 12-32 threads the bilayer; that stretch reads TADIVGVTLTFCVNIVLLGLL. Residues 33 to 42 lie on the Cytoplasmic side of the membrane; the sequence is KTRGKNLGTY. The chain crosses the membrane as a helical span at residues 43–63; that stretch reads KYLMAFFSVFSIFYAIIEFIL. The Extracellular portion of the chain corresponds to 64–92; it reads RPIMHIENTTFFLISRKRFNYSTKLGKIN. Residues N71 and N83 are each glycosylated (N-linked (GlcNAc...) asparagine). Residues 93–113 traverse the membrane as a helical segment; sequence SAFYCACFATSFVVSGVHFVY. The Cytoplasmic portion of the chain corresponds to 114–131; sequence RYFATCKPNLLRLFNLPT. The chain crosses the membrane as a helical span at residues 132–152; sequence LLLWPLGCSVPVTMWASVSYF. Over 153–201 the chain is Extracellular; the sequence is LYPDTEYTEAAVTNVLNNHYNWIKKENVSYIAYVYYQYENGVRHIYLKN. The N-linked (GlcNAc...) asparagine glycan is linked to N179. The helical transmembrane segment at 202–222 threads the bilayer; that stretch reads LLGCFVHYFVMSMTFVVMFYC. Over 223 to 254 the chain is Cytoplasmic; that stretch reads GYATWKTMNEHKDVSDRTRALQKQLFKALVLQ. A helical transmembrane segment spans residues 255–275; it reads TLIPTIFMYAPTGVMFIAPFF. The Extracellular segment spans residues 276 to 284; that stretch reads DVNLNANAN. A helical transmembrane segment spans residues 285–305; sequence FIVFCSFLYPGLDPLILILII. At 306–339 the chain is on the cytoplasmic side; the sequence is RDFRRTIFNFLCGKKNSVDESRSTTRANLSQVPT.

The protein belongs to the nematode receptor-like protein str family. Interacts with odr-4. In terms of tissue distribution, strongly expressed in the sensory cilia of AWA olfactory neurons, and at low levels in the CEP neurons.

It localises to the cell projection. The protein localises to the cilium membrane. In terms of biological role, an odorant receptor which affects chemotaxis to the volatile odorant diacetyl. Specifies AWA neuronal cell fate via the odr-7 pathway. This chain is Serpentine receptor class r-10, found in Caenorhabditis elegans.